The following is a 406-amino-acid chain: MAKKEVKKIVLAYSGGLDTSIILKWLKNEYGCEVVTFSADLGQGDELEPVREKAFKTGADKVYIDDLREEFVRDFVFPMFRANAIYEGSYLLGTSIARPLIAKRQMEIAQIEGCDAVSHGATGKGNDQVRFELAYYHFNPGITVVAPWREWKLNSRQALINYAKRNDIPIPITKKRPWSSDRNLLHISFEGGILEDTWLEPPENMFVLTKPPEKAPNKPQYVEIEFEKGNAVAVDGVRMSPAELLAHLNTIGGEHGIGRVDLLENRSVGMKSRGVYETPGGTILREAHMAVEQITMDREVMHLRDSLIPRYAEMIYNGYWFSPEREMMQCMIDESQKTVNGVARLKLYKGHCRTVGRKSESDSLFNLDFATFEKDQVYNQADAEGFIKLNSLRLRIRSLMLANKNK.

Residues alanine 12–serine 20 and alanine 39 each bind ATP. L-citrulline is bound by residues tyrosine 90 and serine 95. ATP is bound at residue glycine 120. Threonine 122, asparagine 126, and aspartate 127 together coordinate L-aspartate. Position 126 (asparagine 126) interacts with L-citrulline. Residues arginine 130, serine 179, serine 188, glutamate 264, and tyrosine 276 each coordinate L-citrulline.

The protein belongs to the argininosuccinate synthase family. Type 1 subfamily. In terms of assembly, homotetramer.

It is found in the cytoplasm. The enzyme catalyses L-citrulline + L-aspartate + ATP = 2-(N(omega)-L-arginino)succinate + AMP + diphosphate + H(+). It participates in amino-acid biosynthesis; L-arginine biosynthesis; L-arginine from L-ornithine and carbamoyl phosphate: step 2/3. The polypeptide is Argininosuccinate synthase (Geobacter sp. (strain M21)).